The following is a 74-amino-acid chain: UPF0435 protein BCB4264_A0471 (74 aa).

This sequence belongs to the UPF0435 family.

In Bacillus cereus (strain B4264), this protein is UPF0435 protein BCB4264_A0471.